A 138-amino-acid chain; its full sequence is Probable glycine cleavage system H protein 1 (138 aa).

Residues isoleucine 30–lysine 112 enclose the Lipoyl-binding domain. At lysine 71 the chain carries N6-lipoyllysine.

It belongs to the GcvH family. The glycine cleavage system is composed of four proteins: P, T, L and H. The cofactor is (R)-lipoate.

In terms of biological role, the glycine cleavage system catalyzes the degradation of glycine. The H protein shuttles the methylamine group of glycine from the P protein to the T protein. The sequence is that of Probable glycine cleavage system H protein 1 from Sulfolobus acidocaldarius (strain ATCC 33909 / DSM 639 / JCM 8929 / NBRC 15157 / NCIMB 11770).